Here is a 401-residue protein sequence, read N- to C-terminus: Argininosuccinate synthase (401 aa).

8-16 is an ATP binding site; it reads AYSGGLDTS. Position 85 (Tyr-85) interacts with L-citrulline. Position 115 (Gly-115) interacts with ATP. L-aspartate-binding residues include Thr-117, Asn-121, and Asp-122. Asn-121 provides a ligand contact to L-citrulline. Residues Arg-125, Ser-173, Glu-258, and Tyr-270 each contribute to the L-citrulline site.

The protein belongs to the argininosuccinate synthase family. Type 1 subfamily. In terms of assembly, homotetramer.

The protein localises to the cytoplasm. It carries out the reaction L-citrulline + L-aspartate + ATP = 2-(N(omega)-L-arginino)succinate + AMP + diphosphate + H(+). The protein operates within amino-acid biosynthesis; L-arginine biosynthesis; L-arginine from L-ornithine and carbamoyl phosphate: step 2/3. The sequence is that of Argininosuccinate synthase from Staphylococcus aureus (strain MSSA476).